The sequence spans 420 residues: Glutamate dehydrogenase (420 aa).

Lysine 105 is a catalytic residue. 220-226 (GYGNAGY) provides a ligand contact to NAD(+).

This sequence belongs to the Glu/Leu/Phe/Val dehydrogenases family. As to quaternary structure, homohexamer.

The protein resides in the cytoplasm. It catalyses the reaction L-glutamate + NAD(+) + H2O = 2-oxoglutarate + NH4(+) + NADH + H(+). It carries out the reaction L-glutamate + NADP(+) + H2O = 2-oxoglutarate + NH4(+) + NADPH + H(+). This chain is Glutamate dehydrogenase (gdhA), found in Pyrococcus abyssi (strain GE5 / Orsay).